Here is a 205-residue protein sequence, read N- to C-terminus: High frequency lysogenization protein HflD homolog (205 aa).

This sequence belongs to the HflD family.

Its subcellular location is the cytoplasm. It is found in the cell inner membrane. This is High frequency lysogenization protein HflD homolog from Vibrio parahaemolyticus serotype O3:K6 (strain RIMD 2210633).